The chain runs to 99 residues: Small ribosomal subunit protein bS18 (99 aa).

The protein belongs to the bacterial ribosomal protein bS18 family. As to quaternary structure, part of the 30S ribosomal subunit. Forms a tight heterodimer with protein bS6.

Functionally, binds as a heterodimer with protein bS6 to the central domain of the 16S rRNA, where it helps stabilize the platform of the 30S subunit. The polypeptide is Small ribosomal subunit protein bS18 (Christiangramia forsetii (strain DSM 17595 / CGMCC 1.15422 / KT0803) (Gramella forsetii)).